A 483-amino-acid chain; its full sequence is Proline--tRNA ligase (483 aa).

The protein belongs to the class-II aminoacyl-tRNA synthetase family. ProS type 3 subfamily. As to quaternary structure, homodimer.

The protein resides in the cytoplasm. It carries out the reaction tRNA(Pro) + L-proline + ATP = L-prolyl-tRNA(Pro) + AMP + diphosphate. Catalyzes the attachment of proline to tRNA(Pro) in a two-step reaction: proline is first activated by ATP to form Pro-AMP and then transferred to the acceptor end of tRNA(Pro). The chain is Proline--tRNA ligase from Sulfurisphaera tokodaii (strain DSM 16993 / JCM 10545 / NBRC 100140 / 7) (Sulfolobus tokodaii).